Reading from the N-terminus, the 394-residue chain is Ketoisovalerate oxidoreductase subunit VorA (394 aa).

In terms of assembly, heterotetramer of one alpha, one beta, one delta and one gamma chain.

The catalysed reaction is 3-methyl-2-oxobutanoate + 2 oxidized [2Fe-2S]-[ferredoxin] + CoA = 2-methylpropanoyl-CoA + 2 reduced [2Fe-2S]-[ferredoxin] + CO2 + H(+). In Pyrococcus horikoshii (strain ATCC 700860 / DSM 12428 / JCM 9974 / NBRC 100139 / OT-3), this protein is Ketoisovalerate oxidoreductase subunit VorA (vorA).